The following is a 150-amino-acid chain: MNNIQIRNYQPGDFQQLCAIFIRAVTMTASQHYSPQQISAWAQIDESRWKEKLAKSQVWVAIINAQPVGFISRIEHYIDMLFVDPEYTRRGVASALLKPLIKSESELTVDASITAKPFFERYGFQTVKQQRVECRGAWFTNFYMRYKPQH.

The N-acetyltransferase domain maps to I4–Q149.

Belongs to the acetyltransferase family.

This is an uncharacterized protein from Escherichia coli (strain K12).